We begin with the raw amino-acid sequence, 221 residues long: 7-cyano-7-deazaguanine synthase (221 aa).

Residue 10 to 20 (FSGGQDSTTCL) coordinates ATP. Residues cysteine 187, cysteine 196, cysteine 199, and cysteine 202 each coordinate Zn(2+).

It belongs to the QueC family. In terms of assembly, homodimer. Zn(2+) is required as a cofactor.

The enzyme catalyses 7-carboxy-7-deazaguanine + NH4(+) + ATP = 7-cyano-7-deazaguanine + ADP + phosphate + H2O + H(+). It participates in purine metabolism; 7-cyano-7-deazaguanine biosynthesis. In terms of biological role, catalyzes the ATP-dependent conversion of 7-carboxy-7-deazaguanine (CDG) to 7-cyano-7-deazaguanine (preQ(0)). The polypeptide is 7-cyano-7-deazaguanine synthase (Shouchella clausii (strain KSM-K16) (Alkalihalobacillus clausii)).